A 190-amino-acid polypeptide reads, in one-letter code: dCTP deaminase, dUMP-forming (190 aa).

Residues 101–106 (KSSLGR), aspartate 119, 127–129 (TLE), glutamine 148, tyrosine 162, and glutamine 174 contribute to the dCTP site. Glutamate 129 serves as the catalytic Proton donor/acceptor. The segment at 163 to 190 (GSTRVGSKYQGQRGPTPSRSYQNFITST) is disordered. The segment covering 171–190 (YQGQRGPTPSRSYQNFITST) has biased composition (polar residues).

This sequence belongs to the dCTP deaminase family. In terms of assembly, homotrimer.

The enzyme catalyses dCTP + 2 H2O = dUMP + NH4(+) + diphosphate. It functions in the pathway pyrimidine metabolism; dUMP biosynthesis; dUMP from dCTP: step 1/1. Bifunctional enzyme that catalyzes both the deamination of dCTP to dUTP and the hydrolysis of dUTP to dUMP without releasing the toxic dUTP intermediate. This Mycobacterium avium (strain 104) protein is dCTP deaminase, dUMP-forming.